We begin with the raw amino-acid sequence, 176 residues long: Ribosome maturation factor RimM (176 aa).

One can recognise a PRC barrel domain in the interval 101–174 (EGHYYIYQLL…EIRVELPPGL (74 aa)).

This sequence belongs to the RimM family. As to quaternary structure, binds ribosomal protein uS19.

Its subcellular location is the cytoplasm. Its function is as follows. An accessory protein needed during the final step in the assembly of 30S ribosomal subunit, possibly for assembly of the head region. Essential for efficient processing of 16S rRNA. May be needed both before and after RbfA during the maturation of 16S rRNA. It has affinity for free ribosomal 30S subunits but not for 70S ribosomes. This is Ribosome maturation factor RimM from Moorella thermoacetica (strain ATCC 39073 / JCM 9320).